The primary structure comprises 503 residues: Cytochrome c-552 (503 aa).

Residues 1-16 (MKKNTIILVGALIAIA) form the signal peptide. A heme c-binding site is contributed by His-102. Heme contacts are provided by Cys-130, Cys-133, and Lys-134. 6 residues coordinate heme c: Cys-168, Cys-171, His-172, Cys-210, Cys-213, and His-214. Glu-216, Tyr-217, Lys-273, and Gln-275 together coordinate Ca(2+). Tyr-217 contributes to the substrate binding site. Residue His-276 participates in substrate binding. His-287, Cys-294, Cys-297, His-298, His-312, Cys-325, Cys-328, His-329, and His-404 together coordinate heme c.

The protein belongs to the cytochrome c-552 family. Requires Ca(2+) as cofactor. It depends on heme c as a cofactor.

The protein localises to the periplasm. The catalysed reaction is 6 Fe(III)-[cytochrome c] + NH4(+) + 2 H2O = 6 Fe(II)-[cytochrome c] + nitrite + 8 H(+). It participates in nitrogen metabolism; nitrate reduction (assimilation). Functionally, catalyzes the reduction of nitrite to ammonia, consuming six electrons in the process. The sequence is that of Cytochrome c-552 from Maridesulfovibrio salexigens (strain ATCC 14822 / DSM 2638 / NCIMB 8403 / VKM B-1763) (Desulfovibrio salexigens).